Consider the following 161-residue polypeptide: DNA-binding protein inhibitor ID-4 (161 aa).

In terms of domain architecture, bHLH spans 52-104 (AAEAAADEPALCLQCDMNDCYSRLRRLVPTIPPNKKVSKVEILQHVIDYILDL). A compositionally biased stretch (pro residues) spans 117–126 (QPPPPAPPHH). The tract at residues 117–161 (QPPPPAPPHHPAGTCPAAPPRTPLTALNTDPAGAVNKQGDSILCR) is disordered.

As to quaternary structure, heterodimer with other HLH proteins.

The protein resides in the nucleus. Transcriptional regulator (lacking a basic DNA binding domain) which negatively regulates the basic helix-loop-helix (bHLH) transcription factors by forming heterodimers and inhibiting their DNA binding and transcriptional activity. Implicated in regulating a variety of cellular processes, including cellular growth, senescence, differentiation, apoptosis, angiogenesis, and neoplastic transformation. The chain is DNA-binding protein inhibitor ID-4 (ID4) from Homo sapiens (Human).